A 208-amino-acid chain; its full sequence is Uracil phosphoribosyltransferase (208 aa).

5-phospho-alpha-D-ribose 1-diphosphate contacts are provided by residues arginine 78, arginine 103, and 130–138; that span reads DPMLATGGS. Uracil is bound by residues isoleucine 193 and 198 to 200; that span reads GDA. 5-phospho-alpha-D-ribose 1-diphosphate is bound at residue aspartate 199.

The protein belongs to the UPRTase family. Mg(2+) serves as cofactor.

The catalysed reaction is UMP + diphosphate = 5-phospho-alpha-D-ribose 1-diphosphate + uracil. Its pathway is pyrimidine metabolism; UMP biosynthesis via salvage pathway; UMP from uracil: step 1/1. Its activity is regulated as follows. Allosterically activated by GTP. Its function is as follows. Catalyzes the conversion of uracil and 5-phospho-alpha-D-ribose 1-diphosphate (PRPP) to UMP and diphosphate. This Shewanella halifaxensis (strain HAW-EB4) protein is Uracil phosphoribosyltransferase.